A 49-amino-acid polypeptide reads, in one-letter code: Light-harvesting protein B800/850/890 alpha-3 chain (49 aa).

Residues 1-14 are Cytoplasmic-facing; the sequence is MNQARIWLVVKPSV. The helical transmembrane segment at 15 to 35 threads the bilayer; sequence GLPLLLGVVLLIALLVHGAIL. A bacteriochlorophyll is bound at residue H31. Residues 36–49 lie on the Periplasmic side of the membrane; sequence TNTSWYPTYFEGNW.

It belongs to the antenna complex alpha subunit family. As to quaternary structure, the core complex is formed by different alpha and beta chains, binding bacteriochlorophyll molecules, and arranged most probably in tetrameric structures disposed around the reaction center. The non-pigmented gamma chains may constitute additional components.

It is found in the cell inner membrane. Functionally, antenna complexes are light-harvesting systems, which transfer the excitation energy to the reaction centers. This Halorhodospira halophila (strain DSM 244 / SL1) (Ectothiorhodospira halophila (strain DSM 244 / SL1)) protein is Light-harvesting protein B800/850/890 alpha-3 chain.